We begin with the raw amino-acid sequence, 149 residues long: Calmodulin-like protein 3 (149 aa).

EF-hand domains lie at Glu-8–Asn-43, Pro-44–Asp-79, Asp-81–Lys-116, and Leu-117–Lys-149. Ca(2+)-binding residues include Asp-21, Asp-23, Asp-25, Cys-27, Glu-32, Asp-57, Asp-59, Asn-61, Thr-63, Glu-68, Asp-94, Asp-96, Asn-98, Glu-105, Asp-130, Asp-132, Asp-134, Gln-136, and Glu-141.

This sequence belongs to the calmodulin family. In terms of assembly, interacts with MYO10, the interaction is calcium-dependent and essential for MYO10 function in filopodial extension.

Its function is as follows. May function as a specific light chain of unconventional myosin-10 (MYO10), also enhances MYO10 translation, possibly by acting as a chaperone for the emerging MYO10 heavy chain protein. May compete with calmodulin by binding, with different affinities, to cellular substrates. The chain is Calmodulin-like protein 3 (Calml3) from Rattus norvegicus (Rat).